The following is a 286-amino-acid chain: Bifunctional protein FolD (286 aa).

Residues 165–167 (GRS) and serine 190 contribute to the NADP(+) site.

This sequence belongs to the tetrahydrofolate dehydrogenase/cyclohydrolase family. In terms of assembly, homodimer.

It carries out the reaction (6R)-5,10-methylene-5,6,7,8-tetrahydrofolate + NADP(+) = (6R)-5,10-methenyltetrahydrofolate + NADPH. It catalyses the reaction (6R)-5,10-methenyltetrahydrofolate + H2O = (6R)-10-formyltetrahydrofolate + H(+). It participates in one-carbon metabolism; tetrahydrofolate interconversion. Catalyzes the oxidation of 5,10-methylenetetrahydrofolate to 5,10-methenyltetrahydrofolate and then the hydrolysis of 5,10-methenyltetrahydrofolate to 10-formyltetrahydrofolate. This is Bifunctional protein FolD from Staphylococcus aureus (strain USA300).